Consider the following 433-residue polypeptide: Adenylosuccinate synthetase (433 aa).

GTP-binding positions include 12 to 18 and 40 to 42; these read GDEGKGK and GHT. The active-site Proton acceptor is aspartate 13. 2 residues coordinate Mg(2+): aspartate 13 and glycine 40. IMP-binding positions include 13–16, 38–41, threonine 130, arginine 144, glutamine 225, threonine 240, and arginine 304; these read DEGK and NAGH. Histidine 41 acts as the Proton donor in catalysis. 300-306 lines the substrate pocket; sequence ATTGRPR. GTP contacts are provided by residues arginine 306, 332–334, and 414–416; these read KLD and SIG.

Belongs to the adenylosuccinate synthetase family. As to quaternary structure, homodimer. The cofactor is Mg(2+).

The protein localises to the cytoplasm. The enzyme catalyses IMP + L-aspartate + GTP = N(6)-(1,2-dicarboxyethyl)-AMP + GDP + phosphate + 2 H(+). It functions in the pathway purine metabolism; AMP biosynthesis via de novo pathway; AMP from IMP: step 1/2. In terms of biological role, plays an important role in the de novo pathway of purine nucleotide biosynthesis. Catalyzes the first committed step in the biosynthesis of AMP from IMP. The sequence is that of Adenylosuccinate synthetase from Geobacter sulfurreducens (strain ATCC 51573 / DSM 12127 / PCA).